The sequence spans 326 residues: Beta-ketoacyl-[acyl-carrier-protein] synthase III (326 aa).

Catalysis depends on residues Cys-111 and His-252. The segment at 253 to 257 is ACP-binding; that stretch reads QANIR. Asn-282 is a catalytic residue.

This sequence belongs to the thiolase-like superfamily. FabH family. As to quaternary structure, homodimer.

It localises to the plastid. Its subcellular location is the chloroplast. The enzyme catalyses malonyl-[ACP] + acetyl-CoA + H(+) = 3-oxobutanoyl-[ACP] + CO2 + CoA. The protein operates within lipid metabolism; fatty acid biosynthesis. In terms of biological role, catalyzes the condensation reaction of fatty acid synthesis by the addition to an acyl acceptor of two carbons from malonyl-ACP. Catalyzes the first condensation reaction which initiates fatty acid synthesis and may therefore play a role in governing the total rate of fatty acid production. Possesses both acetoacetyl-ACP synthase and acetyl transacylase activities. Its substrate specificity determines the biosynthesis of branched-chain and/or straight-chain of fatty acids. This chain is Beta-ketoacyl-[acyl-carrier-protein] synthase III, found in Porphyra purpurea (Red seaweed).